The sequence spans 88 residues: Small ribosomal subunit protein uS15 (88 aa).

Belongs to the universal ribosomal protein uS15 family. In terms of assembly, part of the 30S ribosomal subunit. Forms a bridge to the 50S subunit in the 70S ribosome, contacting the 23S rRNA.

Functionally, one of the primary rRNA binding proteins, it binds directly to 16S rRNA where it helps nucleate assembly of the platform of the 30S subunit by binding and bridging several RNA helices of the 16S rRNA. Forms an intersubunit bridge (bridge B4) with the 23S rRNA of the 50S subunit in the ribosome. The chain is Small ribosomal subunit protein uS15 from Geotalea uraniireducens (strain Rf4) (Geobacter uraniireducens).